Reading from the N-terminus, the 187-residue chain is ATP synthase subunit b (187 aa).

The helical transmembrane segment at asparagine 32–glycine 52 threads the bilayer.

It belongs to the ATPase B chain family. In terms of assembly, F-type ATPases have 2 components, F(1) - the catalytic core - and F(0) - the membrane proton channel. F(1) has five subunits: alpha(3), beta(3), gamma(1), delta(1), epsilon(1). F(0) has four main subunits: a(1), b(1), b'(1) and c(10-14). The alpha and beta chains form an alternating ring which encloses part of the gamma chain. F(1) is attached to F(0) by a central stalk formed by the gamma and epsilon chains, while a peripheral stalk is formed by the delta, b and b' chains.

The protein localises to the cellular thylakoid membrane. F(1)F(0) ATP synthase produces ATP from ADP in the presence of a proton or sodium gradient. F-type ATPases consist of two structural domains, F(1) containing the extramembraneous catalytic core and F(0) containing the membrane proton channel, linked together by a central stalk and a peripheral stalk. During catalysis, ATP synthesis in the catalytic domain of F(1) is coupled via a rotary mechanism of the central stalk subunits to proton translocation. Its function is as follows. Component of the F(0) channel, it forms part of the peripheral stalk, linking F(1) to F(0). The sequence is that of ATP synthase subunit b from Trichormus variabilis (strain ATCC 29413 / PCC 7937) (Anabaena variabilis).